The sequence spans 431 residues: Glutamate-1-semialdehyde 2,1-aminomutase (431 aa).

Residue Lys-267 is modified to N6-(pyridoxal phosphate)lysine.

Belongs to the class-III pyridoxal-phosphate-dependent aminotransferase family. HemL subfamily. In terms of assembly, homodimer. Pyridoxal 5'-phosphate serves as cofactor.

It is found in the cytoplasm. The catalysed reaction is (S)-4-amino-5-oxopentanoate = 5-aminolevulinate. It functions in the pathway porphyrin-containing compound metabolism; protoporphyrin-IX biosynthesis; 5-aminolevulinate from L-glutamyl-tRNA(Glu): step 2/2. This Myxococcus xanthus (strain DK1622) protein is Glutamate-1-semialdehyde 2,1-aminomutase.